The chain runs to 159 residues: Ribosomal RNA large subunit methyltransferase H (159 aa).

S-adenosyl-L-methionine contacts are provided by residues leucine 76, glycine 108, and 127–132 (FSRMTF).

This sequence belongs to the RNA methyltransferase RlmH family. In terms of assembly, homodimer.

Its subcellular location is the cytoplasm. The enzyme catalyses pseudouridine(1915) in 23S rRNA + S-adenosyl-L-methionine = N(3)-methylpseudouridine(1915) in 23S rRNA + S-adenosyl-L-homocysteine + H(+). In terms of biological role, specifically methylates the pseudouridine at position 1915 (m3Psi1915) in 23S rRNA. This is Ribosomal RNA large subunit methyltransferase H from Bacillus licheniformis (strain ATCC 14580 / DSM 13 / JCM 2505 / CCUG 7422 / NBRC 12200 / NCIMB 9375 / NCTC 10341 / NRRL NRS-1264 / Gibson 46).